The sequence spans 281 residues: Imidazoleglycerol-phosphate dehydratase, chloroplastic (281 aa).

Residues 1 to 85 constitute a chloroplast transit peptide; sequence MELYAASHSL…TSLPFHPETR (85 aa). Substrate is bound by residues glutamate 95, 121 to 129, 147 to 151, arginine 173, and arginine 195; these read HMLDQLASH and HHTNE. Mn(2+) contacts are provided by histidine 121, histidine 147, histidine 148, and glutamate 151. 4 residues coordinate Mn(2+): histidine 219, histidine 243, histidine 244, and glutamate 247. Substrate is bound by residues 243–251 and 273–275; these read HHIIEATFK and SSK.

The protein belongs to the imidazoleglycerol-phosphate dehydratase family. Requires Mn(2+) as cofactor.

It localises to the plastid. The protein resides in the chloroplast. The enzyme catalyses D-erythro-1-(imidazol-4-yl)glycerol 3-phosphate = 3-(imidazol-4-yl)-2-oxopropyl phosphate + H2O. It participates in amino-acid biosynthesis; L-histidine biosynthesis; L-histidine from 5-phospho-alpha-D-ribose 1-diphosphate: step 6/9. This is Imidazoleglycerol-phosphate dehydratase, chloroplastic from Pisum sativum (Garden pea).